The sequence spans 141 residues: Nucleoside diphosphate kinase (141 aa).

ATP-binding residues include Lys-11, Phe-59, Arg-87, Thr-93, Arg-104, and Asn-114. His-117 serves as the catalytic Pros-phosphohistidine intermediate.

This sequence belongs to the NDK family. As to quaternary structure, homotetramer. Mg(2+) is required as a cofactor.

The protein localises to the cytoplasm. It carries out the reaction a 2'-deoxyribonucleoside 5'-diphosphate + ATP = a 2'-deoxyribonucleoside 5'-triphosphate + ADP. The catalysed reaction is a ribonucleoside 5'-diphosphate + ATP = a ribonucleoside 5'-triphosphate + ADP. Major role in the synthesis of nucleoside triphosphates other than ATP. The ATP gamma phosphate is transferred to the NDP beta phosphate via a ping-pong mechanism, using a phosphorylated active-site intermediate. This chain is Nucleoside diphosphate kinase, found in Nitrosomonas eutropha (strain DSM 101675 / C91 / Nm57).